Reading from the N-terminus, the 20-residue chain is Trypsin inhibitor A chain (20 aa).

This sequence belongs to the protease inhibitor I3 (leguminous Kunitz-type inhibitor) family. Heterodimer of an 'A' and a 'B' chain linked by a disulfide bond.

Functionally, inhibits trypsin and alpha-chymotrypsin. The polypeptide is Trypsin inhibitor A chain (Albizia julibrissin (Silk tree)).